We begin with the raw amino-acid sequence, 131 residues long: Small ribosomal subunit protein uS8 (131 aa).

The protein belongs to the universal ribosomal protein uS8 family. As to quaternary structure, part of the 30S ribosomal subunit. Contacts proteins S5 and S12.

In terms of biological role, one of the primary rRNA binding proteins, it binds directly to 16S rRNA central domain where it helps coordinate assembly of the platform of the 30S subunit. The chain is Small ribosomal subunit protein uS8 from Vesicomyosocius okutanii subsp. Calyptogena okutanii (strain HA).